The primary structure comprises 452 residues: Adenylosuccinate synthetase (452 aa).

GTP-binding positions include 40–46 and 68–70; these read GDEGKGK and GHT. Residue D41 is the Proton acceptor of the active site. Residues D41 and G68 each contribute to the Mg(2+) site. IMP-binding positions include 41 to 44, 66 to 69, T158, R172, N250, T265, and R329; these read DEGK and NAGH. H69 acts as the Proton donor in catalysis. 325 to 331 is a substrate binding site; sequence VTTKRKR. GTP contacts are provided by residues R331, 357 to 359, and 440 to 442; these read KLD and GVG.

It belongs to the adenylosuccinate synthetase family. In terms of assembly, homodimer. Mg(2+) serves as cofactor.

It localises to the cytoplasm. It catalyses the reaction IMP + L-aspartate + GTP = N(6)-(1,2-dicarboxyethyl)-AMP + GDP + phosphate + 2 H(+). It functions in the pathway purine metabolism; AMP biosynthesis via de novo pathway; AMP from IMP: step 1/2. In terms of biological role, plays an important role in the de novo pathway and in the salvage pathway of purine nucleotide biosynthesis. Catalyzes the first committed step in the biosynthesis of AMP from IMP. This Drosophila grimshawi (Hawaiian fruit fly) protein is Adenylosuccinate synthetase.